The following is a 787-amino-acid chain: Replication origin-binding protein (787 aa).

The Helicase ATP-binding domain occupies 39 to 195; it reads HFKTFSEQIK…SLCMPHFKSA (157 aa). Residue 52-59 coordinates ATP; that stretch reads APMGSGKT.

It belongs to the herpesviridae OriBP family.

Functionally, probably involved in DNA replication. Binds the origin of replication (ori). The sequence is that of Replication origin-binding protein (U73) from Human herpesvirus 7 (strain JI) (HHV-7).